Here is a 574-residue protein sequence, read N- to C-terminus: Proline--tRNA ligase (574 aa).

It belongs to the class-II aminoacyl-tRNA synthetase family. ProS type 1 subfamily. Homodimer.

The protein localises to the cytoplasm. The enzyme catalyses tRNA(Pro) + L-proline + ATP = L-prolyl-tRNA(Pro) + AMP + diphosphate. Catalyzes the attachment of proline to tRNA(Pro) in a two-step reaction: proline is first activated by ATP to form Pro-AMP and then transferred to the acceptor end of tRNA(Pro). As ProRS can inadvertently accommodate and process non-cognate amino acids such as alanine and cysteine, to avoid such errors it has two additional distinct editing activities against alanine. One activity is designated as 'pretransfer' editing and involves the tRNA(Pro)-independent hydrolysis of activated Ala-AMP. The other activity is designated 'posttransfer' editing and involves deacylation of mischarged Ala-tRNA(Pro). The misacylated Cys-tRNA(Pro) is not edited by ProRS. The protein is Proline--tRNA ligase of Thioalkalivibrio sulfidiphilus (strain HL-EbGR7).